Consider the following 367-residue polypeptide: Protein trichome birefringence-like 39 (367 aa).

The chain crosses the membrane as a helical; Signal-anchor for type II membrane protein span at residues 7 to 29 (GNPSFLFFFFFFLCLSTVSAYIN). The GDS motif motif lies at 120–122 (GDS). A DCXHWCLPGXXDXWN motif motif is present at residues 343-357 (DCSHWCLPGLPDTWN).

It belongs to the PC-esterase family. TBL subfamily.

Its subcellular location is the membrane. Functionally, may act as a bridging protein that binds pectin and other cell wall polysaccharides. Probably involved in maintaining esterification of pectins. May be involved in the specific O-acetylation of cell wall polymers. In Arabidopsis thaliana (Mouse-ear cress), this protein is Protein trichome birefringence-like 39 (TBL39).